A 221-amino-acid chain; its full sequence is Octanoyltransferase (221 aa).

Positions 38–220 (GEIPDTLLLL…GFREVLGDPG (183 aa)) constitute a BPL/LPL catalytic domain. Substrate contacts are provided by residues 84–91 (RGGDATFH), 149–151 (AIG), and 163–165 (GFA). Cys181 serves as the catalytic Acyl-thioester intermediate.

The protein belongs to the LipB family.

The protein localises to the cytoplasm. It catalyses the reaction octanoyl-[ACP] + L-lysyl-[protein] = N(6)-octanoyl-L-lysyl-[protein] + holo-[ACP] + H(+). The protein operates within protein modification; protein lipoylation via endogenous pathway; protein N(6)-(lipoyl)lysine from octanoyl-[acyl-carrier-protein]: step 1/2. Functionally, catalyzes the transfer of endogenously produced octanoic acid from octanoyl-acyl-carrier-protein onto the lipoyl domains of lipoate-dependent enzymes. Lipoyl-ACP can also act as a substrate although octanoyl-ACP is likely to be the physiological substrate. The sequence is that of Octanoyltransferase from Rubrobacter xylanophilus (strain DSM 9941 / JCM 11954 / NBRC 16129 / PRD-1).